Reading from the N-terminus, the 250-residue chain is MGAQPSRRRMTEAQHMALAELPPELLLQVLSHVPPRALVTRCRPVCRAWRDLVDGPSVWLLQLARDRSAEGRALYALAQSCPADRNGHDDFPLCALARFCLLAPLGRNLIYNSCGEQGFRGWEVEHGGNGWAVEKNLTMVPGAPSQTCFVTSFEWCFKRQLVDLVKEGVWQELLDSAQIEIYIADWWGARENCGCIYRLRVRLLDEHENEVVKFSASPNPVLQWTERSCRQVSPDCSLNPGLLQGLSRLH.

Residues 15–62 enclose the F-box domain; that stretch reads HMALAELPPELLLQVLSHVPPRALVTRCRPVCRAWRDLVDGPSVWLLQ. In terms of domain architecture, FBA spans 99–250; sequence FCLLAPLGRN…GLLQGLSRLH (152 aa).

In terms of assembly, part of a SCF (SKP1-cullin-F-box) protein ligase complex. Interacts with SKP1 and CUL1.

Substrate-recognition component of the SCF (SKP1-CUL1-F-box protein)-type E3 ubiquitin ligase complex. Able to recognize and bind denatured glycoproteins, which are modified with complex-type oligosaccharides. Also recognizes sulfated glycans. Does not bind high-mannose glycoproteins. The chain is F-box only protein 17 (Fbxo17) from Rattus norvegicus (Rat).